Here is a 316-residue protein sequence, read N- to C-terminus: M-phase inducer phosphatase cdc-25.3 (316 aa).

Residues 35 to 65 (QNRQHSSAISHISNSSPPTRKRSIDGGYTSG) are disordered. Residues 39–50 (HSSAISHISNSS) show a composition bias toward low complexity. The Rhodanese domain occupies 136–242 (FMQKYILIDC…FYAFTRGLEK (107 aa)).

Belongs to the MPI phosphatase family.

It catalyses the reaction O-phospho-L-tyrosyl-[protein] + H2O = L-tyrosyl-[protein] + phosphate. This is M-phase inducer phosphatase cdc-25.3 (cdc-25.3) from Caenorhabditis elegans.